The primary structure comprises 82 residues: Small ribosomal subunit protein bS18 (82 aa).

Belongs to the bacterial ribosomal protein bS18 family. Part of the 30S ribosomal subunit. Forms a tight heterodimer with protein bS6.

Binds as a heterodimer with protein bS6 to the central domain of the 16S rRNA, where it helps stabilize the platform of the 30S subunit. The chain is Small ribosomal subunit protein bS18 from Rhizobium rhizogenes (strain K84 / ATCC BAA-868) (Agrobacterium radiobacter).